The sequence spans 322 residues: Protein-L-isoaspartate O-methyltransferase (322 aa).

The disordered stretch occupies residues 1–101; sequence MSGERAKRFP…AKQGDRSAAP (101 aa). Residues 14–29 show a composition bias toward basic and acidic residues; that stretch reads EDLKREPRKPEGRVAE. 2 stretches are compositionally biased toward low complexity: residues 33–51 and 76–91; these read AGDA…PAAA and HAPA…PQGG. Ser170 is a catalytic residue.

This sequence belongs to the methyltransferase superfamily. L-isoaspartyl/D-aspartyl protein methyltransferase family.

It localises to the cytoplasm. It catalyses the reaction [protein]-L-isoaspartate + S-adenosyl-L-methionine = [protein]-L-isoaspartate alpha-methyl ester + S-adenosyl-L-homocysteine. Functionally, catalyzes the methyl esterification of L-isoaspartyl residues in peptides and proteins that result from spontaneous decomposition of normal L-aspartyl and L-asparaginyl residues. It plays a role in the repair and/or degradation of damaged proteins. This chain is Protein-L-isoaspartate O-methyltransferase, found in Burkholderia pseudomallei (strain 1106a).